Reading from the N-terminus, the 313-residue chain is UDP-glucose 4-epimerase (313 aa).

NAD(+) is bound by residues 11–12 (FI), 31–36 (DDLSSG), 56–57 (DI), and 77–81 (LAAQI). 2 residues coordinate substrate: Ser-121 and Tyr-146. Positions 146 and 150 each coordinate NAD(+). Tyr-146 (proton acceptor) is an active-site residue. Substrate-binding positions include Asn-175, 189–190 (VV), 204–206 (KIF), Arg-213, and 271–274 (RLGD).

Belongs to the NAD(P)-dependent epimerase/dehydratase family. As to quaternary structure, homodimer. It depends on NAD(+) as a cofactor.

The enzyme catalyses UDP-alpha-D-glucose = UDP-alpha-D-galactose. It participates in carbohydrate metabolism; galactose metabolism. Functionally, involved in the metabolism of galactose. Catalyzes the conversion of UDP-galactose (UDP-Gal) to UDP-glucose (UDP-Glc) through a mechanism involving the transient reduction of NAD. The polypeptide is UDP-glucose 4-epimerase (Mycolicibacterium smegmatis (strain ATCC 700084 / mc(2)155) (Mycobacterium smegmatis)).